Consider the following 542-residue polypeptide: CTP synthase (542 aa).

The segment at 1–265 (MTRYVFITGG…DREILAHFQM (265 aa)) is amidoligase domain. Ser13 provides a ligand contact to CTP. Ser13 provides a ligand contact to UTP. ATP-binding positions include 14–19 (SLGKGL) and Asp71. Residues Asp71 and Glu139 each contribute to the Mg(2+) site. CTP is bound by residues 146-148 (DIE), 186-191 (KTKPTQ), and Lys222. UTP-binding positions include 186–191 (KTKPTQ) and Lys222. 238–240 (RDV) contributes to the ATP binding site. One can recognise a Glutamine amidotransferase type-1 domain in the interval 291-541 (TIAIVGKYTG…IAAAIEQSRL (251 aa)). Gly353 provides a ligand contact to L-glutamine. The active-site Nucleophile; for glutamine hydrolysis is the Cys380. Residues 381–384 (FGMQ), Glu404, and Arg469 each bind L-glutamine. Catalysis depends on residues His514 and Glu516.

The protein belongs to the CTP synthase family. Homotetramer.

It carries out the reaction UTP + L-glutamine + ATP + H2O = CTP + L-glutamate + ADP + phosphate + 2 H(+). It catalyses the reaction L-glutamine + H2O = L-glutamate + NH4(+). The enzyme catalyses UTP + NH4(+) + ATP = CTP + ADP + phosphate + 2 H(+). Its pathway is pyrimidine metabolism; CTP biosynthesis via de novo pathway; CTP from UDP: step 2/2. With respect to regulation, allosterically activated by GTP, when glutamine is the substrate; GTP has no effect on the reaction when ammonia is the substrate. The allosteric effector GTP functions by stabilizing the protein conformation that binds the tetrahedral intermediate(s) formed during glutamine hydrolysis. Inhibited by the product CTP, via allosteric rather than competitive inhibition. Its function is as follows. Catalyzes the ATP-dependent amination of UTP to CTP with either L-glutamine or ammonia as the source of nitrogen. Regulates intracellular CTP levels through interactions with the four ribonucleotide triphosphates. The polypeptide is CTP synthase (Methylorubrum populi (strain ATCC BAA-705 / NCIMB 13946 / BJ001) (Methylobacterium populi)).